Here is a 182-residue protein sequence, read N- to C-terminus: MSNQELKNTMSKSVEAAQRNFNTIRTGRANTSLLDRISVEYYGAETPLKSLATITTPDSQTIAIQPFDLGSLASIEKAIATSDLGFTPNNDGKIIRINVPPLTEERRKEFCKLASKYAEEGKVALRNIRREAIDRVKKSEKDGDLSEDQSRDEQEKIQKETDNFIKDIEKKLSEKEAEILKV.

The segment at Val136–Glu160 is disordered.

It belongs to the RRF family.

The protein localises to the cytoplasm. Responsible for the release of ribosomes from messenger RNA at the termination of protein biosynthesis. May increase the efficiency of translation by recycling ribosomes from one round of translation to another. This chain is Ribosome-recycling factor, found in Prochlorococcus marinus (strain NATL1A).